Reading from the N-terminus, the 367-residue chain is Peptide chain release factor 2 (367 aa).

Q249 carries the N5-methylglutamine modification.

It belongs to the prokaryotic/mitochondrial release factor family. Methylated by PrmC. Methylation increases the termination efficiency of RF2.

The protein localises to the cytoplasm. In terms of biological role, peptide chain release factor 2 directs the termination of translation in response to the peptide chain termination codons UGA and UAA. This Thermotoga petrophila (strain ATCC BAA-488 / DSM 13995 / JCM 10881 / RKU-1) protein is Peptide chain release factor 2.